The chain runs to 316 residues: Geminin coiled-coil domain-containing protein 1 (316 aa).

Residues 82 to 117 (QISANKQLQDTLLQKEEELSRLHEENNKLKEFLNSA) are a coiled coil. Composition is skewed to polar residues over residues 134 to 155 (GQSSFCTNPNSRVPFSSNSTPG) and 207 to 234 (MSLQPKQDSPSSGYSSAHLTPGHSQAAT). 2 disordered regions span residues 134-160 (GQSSFCTNPNSRVPFSSNSTPGSKAKR) and 207-269 (MSLQ…DVAP). Threonine 153 is subject to Phosphothreonine; by cdk2. Residues 235–252 (SCSLSPSQCSSASLPESE) are compositionally biased toward low complexity. Polar residues predominate over residues 253-262 (TASPLSSPTY).

This sequence belongs to the GEMC1 family. Interacts with topbp1. Interacts with Cdc45l and the kinase cdk2-cyclin-E (the interaction is direct). Post-translationally, highly phosphorylated by cdk2; stimulates initiation of DNA replication. As to expression, expressed in most tissues. Enriched in proliferating cells from skin and gut.

Its subcellular location is the nucleus. Regulator of DNA replication. Promotes initiation of chromosomal DNA replication by mediating topbp1- and cdk2-dependent recruitment of cdc45l onto replication origins. The chain is Geminin coiled-coil domain-containing protein 1 (gmnc) from Xenopus laevis (African clawed frog).